A 146-amino-acid chain; its full sequence is Late protein OPG112 (146 aa).

Residues 10 to 31 (LAMTAFFGELNTLDIMALIMSI) traverse the membrane as a helical segment.

Belongs to the orthopoxvirus OPG112 family.

It is found in the host membrane. The protein localises to the host cytoplasm. Functionally, contributes to the formation of crescents and immature virions (IV). Interacts with phosphatidylinositol-3-phosphate (PI3P) and phosphatidylinositol-4-phosphate (PI4P) lipids in order to form virion membranes. Mechanistically, mediates proper formation of OPG125-hexamers, and hence the honey comb lattice and spherical immature virus. The chain is Late protein OPG112 (OPG112) from Cynomys gunnisoni (Gunnison's prairie dog).